A 132-amino-acid chain; its full sequence is Fatty acid-binding protein, adipocyte (132 aa).

Positions 22 to 32 (KELGVGFATRK) match the Nuclear localization signal motif. Arginine 107 and arginine 127 together coordinate (9Z,12Z)-octadecadienoate.

This sequence belongs to the calycin superfamily. Fatty-acid binding protein (FABP) family. Monomer.

It is found in the cytoplasm. The protein resides in the nucleus. Functionally, lipid transport protein in adipocytes. Binds both long chain fatty acids and retinoic acid. Delivers long-chain fatty acids and retinoic acid to their cognate receptors in the nucleus. Has the highest binding affinity for linoleic acid and decreasing relative affinity for eicosapentaenoic acid (EPA), alpha-linolenic acid (ALA), docosahexaenoic acid (DHA), oleic acid, palmitic acid and stearic acid, respectively. The polypeptide is Fatty acid-binding protein, adipocyte (Pygoscelis papua (Gentoo penguin)).